A 331-amino-acid chain; its full sequence is Vitamin B12 import system permease protein BtuC (331 aa).

9 helical membrane-spanning segments follow: residues 18-38, 64-84, 91-111, 114-134, 149-169, 194-214, 243-263, 277-297, and 305-325; these read WLFGLTLLLLVTLLISLCAGE, LAVLLVGAALALSGAIMQALF, PGLLGISNGAGVGLIAAVLLG, VLPGWALGLCAIFGALLITFI, LLAGVALGIICSALMTWAVYF, LWLMIALLPVLCWVCLQSQPL, GWMVGVSVALAGAIGFIGLVI, VLLPACMMAGASALLGADIIA, and ELPIGVVTATLGAPVFIWLLL.

This sequence belongs to the binding-protein-dependent transport system permease family. FecCD subfamily. The complex is composed of two ATP-binding proteins (BtuD), two transmembrane proteins (BtuC) and a solute-binding protein (BtuF).

The protein localises to the cell inner membrane. Its function is as follows. Part of the ABC transporter complex BtuCDF involved in vitamin B12 import. Involved in the translocation of the substrate across the membrane. In Klebsiella pneumoniae subsp. pneumoniae (strain ATCC 700721 / MGH 78578), this protein is Vitamin B12 import system permease protein BtuC.